Reading from the N-terminus, the 130-residue chain is DNA-directed RNA polymerase subunit omega (130 aa).

The tract at residues Glu110 to Glu130 is disordered.

Belongs to the RNA polymerase subunit omega family. As to quaternary structure, the RNAP catalytic core consists of 2 alpha, 1 beta, 1 beta' and 1 omega subunit. When a sigma factor is associated with the core the holoenzyme is formed, which can initiate transcription.

The catalysed reaction is RNA(n) + a ribonucleoside 5'-triphosphate = RNA(n+1) + diphosphate. Promotes RNA polymerase assembly. Latches the N- and C-terminal regions of the beta' subunit thereby facilitating its interaction with the beta and alpha subunits. This chain is DNA-directed RNA polymerase subunit omega, found in Bradyrhizobium sp. (strain BTAi1 / ATCC BAA-1182).